Reading from the N-terminus, the 1950-residue chain is MSVADDDLGSLQGHIRRTLRSIHNLPYFRYTRGPTERADMSRALKEFIYRYLYFVISNSGENLPTLFNAHPKQKLSNPELTVFPDSLEDAVDIDKITSQQTIPFYKIDESRIGDVHKHTGRNCGRKFKIGEPLYRCHECGCDDTCVLCIHCFNPKDHVNHHVCTDICTEFTSGICDCGDEEAWNSPLHCKAEEQENDISEDPATNADIKEEDVWNDSVNIALVELVLAEVFDYFIDVFNQNIEPLPTIQKDITIKLREMTQQGKMYERAQFLNDLKYENDYMFDGTTTAKTSPSNSPEASPSLAKIDPENYTVIIYNDEYHNYSQATTALRQGVPDNVHIDLLTSRIDGEGRAMLKCSQDLSSVLGGFFAVQTNGLSATLTSWSEYLHQETCKYIILWITHCLNIPNSSFQTTFRNMMGKTLCSEYLNATECRDMTPVVEKYFSNKFDKNDPYRYIDLSILADGNQIPLGHHKILPESSTHSLSPLINDVETPTSRTYSNTRLQHILYFDNRYWKRLRKDIQNVIIPTLASSNLYKPIFCQQVVEIFNHITRSVAYMDREPQLTAIRECVVQLFTCPTNAKNIFENQSFLDIVWSIIDIFKEFCKVEGGVLIWQRVQKSNLTKSYSISFKQGLYTVETLLSKVHDPNIPLRPKEIISLLTLCKLFNGAWKIKRKEGEHVLHEDQNFISYLEYTTSIYSIIQTAEKVSEKSKDSIDSKLFLNAIRIISSFLGNRSLTYKLIYDSHEVIKFSVSHERVAFMNPLQTMLSFLIEKVSLKDAYEALEDCSDFLKISDFSLRSVVLCSQIDVGFWVRNGMSVLHQASYYKNNPELGSYSRDIHLNQLAILWERDDIPRIIYNILDRWELLDWFTGEVDYQHTVYEDKISFIIQQFIAFIYQILTERQYFKTFSSLKDRRMDQIKNSIIYNLYMKPLSYSKLLRSVPDYLTEDTTEFDEALEEVSVFVEPKGLADNGVFKLKASLYAKVDPLKLLNLENEFESSATIIKSHLAKDKDEIAKVVLIPQVSIKQLDKDALNLGAFTRNTVFAKVVYKLLQVCLDMEDSTFLNELLHLVHGIFRDDELINGKDSIPEAYLSKPICNLLLSIANAKSDVFSESIVRKADYLLEKMIMKKPNELFESLIASFGNQYVNDYKDKKLRQGVNLQETEKERKRRLAKKHQARLLAKFNNQQTKFMKEHESEFDEQDNDVDMVGEKVYESEDFTCALCQDSSSTDFFVIPAYHDHSPIFRPGNIFNPNEFMPMWDGFYNDDEKQAYIDDDVLEALKENGSCGSRKVFVSCNHHIHHNCFKRYVQKKRFSSNAFICPLCQTFSNCTLPLCQTSKANTGLSLDMFLESELSLDTLSRLFKPFTEENYRTINSIFSLMISQCQGFDKAVRKRANFSHKDVSLILSVHWANTISMLEIASRLEKPYSISFFRSREQKYKTLKNILVCIMLFTFVIGKPSMEFEPYPQQPDTVWNQNQLFQYIVRSALFSPVSLRQTVTEALTTFSRQFLRDFLQGLSDAEQVTKLYAKASKIGDVLKVSEQMLFALRTISDVRMEGLDSESIIYDLAYTFLLKSLLPTIRRCLVFIKVLHELVKDSENETLVINGHEVEEELEFEDTAEFVNKALKMITEKESLVDLLTTQESIVSHPYLENIPYEYCGIIKLIDLSKYLNTYVTQSKEIKLREERSQHMKNADNRLDFKICLTCGVKVHLRADRHEMTKHLNKNCFKPFGAFLMPNSSEVCLHLTQPPSNIFISAPYLNSHGEVGRNAMRRGDLTTLNLKRYEHLNRLWINNEIPGYISRVMGDEFRVTILSNGFLFAFNREPRPRRIPPTDEDDEDMEEGEDGFFTEGNDEMDVDDETGQAANLFGVGAEGIAGGGVRDFFQFFENFRNTLQPQGNGDDDAPQNPPPILQFLGPQFDGATIIRNTNPRNLDEDDSDDNDDSDEREIW.

Residues H118, C123, C136, C139, C148, C151, H157, H160, H161, C175, C177, and C189 each coordinate Zn(2+). The UBR-type zinc-finger motif lies at 121 to 194 (RNCGRKFKIG…SPLHCKAEEQ (74 aa)). Residues S296 and S300 each carry the phosphoserine modification. The segment at 678 to 681 (HVLH) is ubiquitin-binding loop. D952 is a binding site for Zn(2+). The tract at residues 1165-1200 (KERKRRLAKKHQARLLAKFNNQQTKFMKEHESEFDE) is UBC2-binding region (U2BR). C1220, C1223, C1295, H1297, H1300, C1303, C1320, and C1323 together coordinate Zn(2+). The RING-type; atypical zinc-finger motif lies at 1220–1324 (CALCQDSSST…SNAFICPLCQ (105 aa)). A cap helical domain (CHD) region spans residues 1333–1665 (LCQTSKANTG…YEYCGIIKLI (333 aa)). Residues C1703, C1706, H1722, C1727, H1763, and D1775 each coordinate Zn(2+). 2 disordered regions span residues 1826–1846 (RPRR…GEDG) and 1893–1950 (TLQP…REIW). Composition is skewed to acidic residues over residues 1833–1846 (TDED…GEDG) and 1934–1950 (DEDD…REIW). S1938 is modified (phosphoserine).

It belongs to the E3 ubiquitin-protein ligase UBR1-like family. Interacts with UBC2. Interacts with RPN2, RPT1 and RPT6 from the 26S proteasome.

The catalysed reaction is S-ubiquitinyl-[E2 ubiquitin-conjugating enzyme]-L-cysteine + [acceptor protein]-L-lysine = [E2 ubiquitin-conjugating enzyme]-L-cysteine + N(6)-ubiquitinyl-[acceptor protein]-L-lysine.. Its pathway is protein modification; protein ubiquitination. Its function is as follows. Ubiquitin ligase protein which is a component of the N-end rule pathway. Recognizes and binds to proteins bearing specific N-terminal residues that are destabilizing according to the N-end rule, leading to their ubiquitination and subsequent degradation. Recognizes both type-1 and type-2 N-degrons, containing positively charged amino acids (Arg, Lys and His) and bulky and hydrophobic amino acids, respectively. The sequence is that of E3 ubiquitin-protein ligase UBR1 from Saccharomyces cerevisiae (strain ATCC 204508 / S288c) (Baker's yeast).